We begin with the raw amino-acid sequence, 234 residues long: Leucyl/phenylalanyl-tRNA--protein transferase (234 aa).

Belongs to the L/F-transferase family.

It localises to the cytoplasm. The catalysed reaction is N-terminal L-lysyl-[protein] + L-leucyl-tRNA(Leu) = N-terminal L-leucyl-L-lysyl-[protein] + tRNA(Leu) + H(+). The enzyme catalyses N-terminal L-arginyl-[protein] + L-leucyl-tRNA(Leu) = N-terminal L-leucyl-L-arginyl-[protein] + tRNA(Leu) + H(+). It catalyses the reaction L-phenylalanyl-tRNA(Phe) + an N-terminal L-alpha-aminoacyl-[protein] = an N-terminal L-phenylalanyl-L-alpha-aminoacyl-[protein] + tRNA(Phe). Its function is as follows. Functions in the N-end rule pathway of protein degradation where it conjugates Leu, Phe and, less efficiently, Met from aminoacyl-tRNAs to the N-termini of proteins containing an N-terminal arginine or lysine. In Shigella dysenteriae serotype 1 (strain Sd197), this protein is Leucyl/phenylalanyl-tRNA--protein transferase.